Here is a 677-residue protein sequence, read N- to C-terminus: Protein hook (677 aa).

Residues 6–123 form the Calponin-homology (CH) domain; the sequence is NEMYYSLLEW…RLLQLVLGCA (118 aa). Coiled-coil stretches lie at residues 135 to 436 and 478 to 588; these read EIMC…KCGH and QTAL…AKEV.

This sequence belongs to the hook family. Homodimer. Interacts with microtubules via its N-terminus.

The protein localises to the cytoplasm. The protein resides in the cytoskeleton. It localises to the endosome. It is found in the synapse. Involved in endocytic trafficking by stabilizing organelles of the endocytic pathway. Probably acts as a cytoskeletal linker protein required to tether endosome vesicles to the cytoskeleton. Involved in modulation of endocytosis at stages required for down-regulation of membrane proteins that control synapse size. Not involved in synaptic vesicle recycling. Required in R7 cells for boss endocytosis into multivesicular bodies (MVBs). Has a role in regulating adult longevity. This Drosophila pseudoobscura pseudoobscura (Fruit fly) protein is Protein hook.